We begin with the raw amino-acid sequence, 82 residues long: Progonadoliberin-3 (82 aa).

The first 23 residues, 1–23, serve as a signal peptide directing secretion; that stretch reads MDLSNRTVVQVVVLALVAQVTLS. The residue at position 24 (Gln-24) is a Pyrrolidone carboxylic acid. The residue at position 33 (Gly-33) is a Glycine amide.

The protein belongs to the GnRH family. In terms of tissue distribution, brain.

Its subcellular location is the secreted. Functionally, stimulates the secretion of gonadotropins. The chain is Progonadoliberin-3 (gnrh3) from Oncorhynchus nerka (Sockeye salmon).